The following is a 763-amino-acid chain: Phospholipid phosphatase-related protein type 4 (763 aa).

Residues 33–54 form a disordered region; that stretch reads VHTSPGGGRRPGQAAGMSAKER. Ser36 is modified (phosphoserine). The next 3 membrane-spanning stretches (helical) occupy residues 67 to 87, 119 to 139, and 178 to 198; these read LPCF…SLYF, AIPF…TIMV, and FVGV…IIQL. Asn214 and Asn219 each carry an N-linked (GlcNAc...) asparagine glycan. Residues 247 to 267 traverse the membrane as a helical segment; that stretch reads SFPSQHATLAAFAAVYVSMYF. An N-linked (GlcNAc...) asparagine glycan is attached at Asn268. 2 helical membrane passes run 276 to 296 and 308 to 328; these read KLLK…CGLT and VYCG…YAVG. At Ser346 the chain carries Phosphoserine. N-linked (GlcNAc...) asparagine glycosylation occurs at Asn362. The residue at position 385 (Ser385) is a Phosphoserine. Asn432 carries an N-linked (GlcNAc...) asparagine glycan. At Ser438 the chain carries Phosphoserine. An N-linked (GlcNAc...) asparagine glycan is attached at Asn455. Residues 458–529 form a disordered region; sequence RKLSLQVIEP…PRVSIQSRPG (72 aa). A phosphoserine mark is found at Ser461 and Ser472. N-linked (GlcNAc...) asparagine glycosylation is found at Asn513, Asn543, and Asn568. At Ser606 the chain carries Phosphoserine. Positions 669 to 694 are enriched in basic and acidic residues; that stretch reads DSESCESLKDSFGSGDRKRSNIDSNE. Disordered stretches follow at residues 669-698 and 739-763; these read DSES…HHHH and ERSN…AYKD. Residues 740 to 749 are compositionally biased toward polar residues; it reads RSNSPENTRN.

This sequence belongs to the PA-phosphatase related phosphoesterase family. O-glycosylated. Probably at Ser-346. In terms of tissue distribution, expressed by glutamatergic neurons (at protein level).

It localises to the postsynaptic density membrane. Functionally, postsynaptic density membrane protein that indirectly regulates glutamatergic synaptic transmission through lysophosphatidic acid (LPA)-mediated signaling pathways. Binds lysophosphatidic acid (LPA) and mediates its internalization into cells. Could act as receptor or a transporter of this lipid at the post-synaptic membrane. Modulates lysophosphatidic acid (LPA) activity in neuron axonal outgrowth during development by attenuating phospholipid-induced axon collapse. The sequence is that of Phospholipid phosphatase-related protein type 4 from Homo sapiens (Human).